The chain runs to 102 residues: Putative protein p21 (102 aa).

A disordered region spans residues 73 to 102 (SHQDRTKQSGRGRILARGKYVVSHPSDQAH).

This chain is Putative protein p21 (21), found in Escherichia coli (Bacteriophage APSE-1).